Here is a 53-residue protein sequence, read N- to C-terminus: Mannose/glucose-specific lectin alpha chain (53 aa).

It belongs to the leguminous lectin family. As to quaternary structure, heterodimer of an alpha and a beta chain.

Functionally, this lectin specifically binds mannose and glucose. The polypeptide is Mannose/glucose-specific lectin alpha chain (Vicia cracca (Bird vetch)).